Here is a 125-residue protein sequence, read N- to C-terminus: Large ribosomal subunit protein eL32 (125 aa).

Belongs to the eukaryotic ribosomal protein eL32 family.

This Sulfolobus acidocaldarius (strain ATCC 33909 / DSM 639 / JCM 8929 / NBRC 15157 / NCIMB 11770) protein is Large ribosomal subunit protein eL32 (rpl32e).